The chain runs to 1052 residues: Carboxylic acid reductase (1052 aa).

Positions Arg21–Tyr344 are adenylation (A) domain. AMP-binding positions include Ser334–Ala335, Thr339, and Tyr419–Arg422. The 84-residue stretch at Ser560–Val643 folds into the Carrier domain. An O-(pantetheine 4'-phosphoryl)serine modification is found at Ser595. The interval Gly684–Leu979 is carboxylic acid reductase (R) domain. Residues Thr693–Ile696, Arg718, Asn774–Trp776, Ser814, Tyr844, and Lys848 each bind NADP(+).

Belongs to the adenylate-forming reductase family. The cofactor is Mg(2+).

The catalysed reaction is an aromatic aldehyde + AMP + diphosphate + NADP(+) = an aromatic carboxylate + ATP + NADPH + H(+). The enzyme catalyses a carboxylate + ATP + NADPH + H(+) = an aldehyde + AMP + diphosphate + NADP(+). It catalyses the reaction benzoate + ATP + NADPH + H(+) = benzaldehyde + AMP + diphosphate + NADP(+). It carries out the reaction (E)-cinnamate + ATP + NADPH + H(+) = (E)-cinnamaldehyde + AMP + diphosphate + NADP(+). The catalysed reaction is piperonylate + ATP + NADPH + H(+) = piperonal + AMP + diphosphate + NADP(+). The enzyme catalyses salicylate + ATP + NADPH + H(+) = salicylaldehyde + AMP + diphosphate + NADP(+). It catalyses the reaction 3-hydroxybenzoate + ATP + NADPH + H(+) = 3-hydroxybenzaldehyde + AMP + diphosphate + NADP(+). It carries out the reaction 2-methoxybenzoate + ATP + NADPH + H(+) = 2-methoxybenzaldehyde + AMP + diphosphate + NADP(+). The catalysed reaction is 3-methoxybenzoate + ATP + NADPH + H(+) = 3-methoxybenzaldehyde + AMP + diphosphate + NADP(+). The enzyme catalyses 4-hydroxybenzoate + ATP + NADPH + H(+) = 4-hydroxybenzaldehyde + AMP + diphosphate + NADP(+). It catalyses the reaction 4-methoxybenzoate + ATP + NADPH + H(+) = 4-methoxybenzaldehyde + AMP + diphosphate + NADP(+). It carries out the reaction 3-phenylpropanoate + ATP + NADPH + H(+) = 3-phenylpropanal + AMP + diphosphate + NADP(+). The catalysed reaction is picolinate + ATP + NADPH + H(+) = picolinal + AMP + diphosphate + NADP(+). The enzyme catalyses propanoate + ATP + NADPH + H(+) = propanal + AMP + diphosphate + NADP(+). It catalyses the reaction butanoate + ATP + NADPH + H(+) = butanal + AMP + diphosphate + NADP(+). It carries out the reaction pentanoate + ATP + NADPH + H(+) = pentanal + AMP + diphosphate + NADP(+). The catalysed reaction is hexanoate + ATP + NADPH + H(+) = hexanal + AMP + diphosphate + NADP(+). The enzyme catalyses heptanoate + ATP + NADPH + H(+) = heptanal + AMP + diphosphate + NADP(+). It catalyses the reaction octanoate + ATP + NADPH + H(+) = octanal + AMP + diphosphate + NADP(+). It carries out the reaction nonanoate + ATP + NADPH + H(+) = nonanal + AMP + diphosphate + NADP(+). Functionally, carboxylic acid reductase that shows a broad range of substrate specificity towards aromatic acids, especially to phenyl carboxylic and phenyl acrylic acids, to convert them into their respective aldehydes. Also able to use aliphatic acids as substrates. The polypeptide is Carboxylic acid reductase (Neurospora crassa (strain ATCC 24698 / 74-OR23-1A / CBS 708.71 / DSM 1257 / FGSC 987)).